We begin with the raw amino-acid sequence, 390 residues long: Protein PIN-LIKES 3 (390 aa).

At 1–14 the chain is on the lumenal side; the sequence is MVKLLELFITSSKP. Residues 15-35 form a helical membrane-spanning segment; it reads VVEILLITSVGFYMALDGVNL. The Cytoplasmic portion of the chain corresponds to 36-43; the sequence is LGHDARKY. A helical transmembrane segment spans residues 44-61; it reads LNNIVFYVFSPSLIGSRL. The Lumenal portion of the chain corresponds to 62 to 76; that stretch reads ADSVTYESLVKMWFM. A helical membrane pass occupies residues 77 to 97; the sequence is PVNVLLTFIIGSLLGWIVIVI. Over 98–107 the chain is Cytoplasmic; sequence TKPPSHLRGL. Residues 108-128 traverse the membrane as a helical segment; it reads ILGCCAAGNLGNMPLIIIPAV. The Lumenal segment spans residues 129–144; it reads CKEKGGPFGDPESCQK. The chain crosses the membrane as a helical span at residues 145-165; the sequence is YGMGYVALSMAMGSIYIWTYV. Topologically, residues 166 to 227 are cytoplasmic; the sequence is YNLMRVLSNS…SLSQKVNLKT (62 aa). The helical transmembrane segment at 228-248 threads the bilayer; that stretch reads IFAPSTIAAMIALVIGLITPL. Residues 249-265 are Lumenal-facing; the sequence is RKLIIGTEAPLRVLQDS. A helical transmembrane segment spans residues 266-286; that stretch reads VTLVGDGAVPAMTMIIGGNLL. Over 287-297 the chain is Cytoplasmic; that stretch reads KGLRSSGMKMS. A helical membrane pass occupies residues 298–318; that stretch reads SIIGVLVARYVLLPMSGVLIV. The Lumenal portion of the chain corresponds to 319–331; sequence RGAYKLDLVTSEP. The helical transmembrane segment at 332–352 threads the bilayer; that stretch reads LYQFVLLLQYAVPPAMNLGTI. Over 353-364 the chain is Cytoplasmic; it reads TQLFGTGESECS. Residues 365–385 traverse the membrane as a helical segment; it reads VIMLWTYSLASIALTVWPTFF. Over 386-390 the chain is Lumenal; that stretch reads MWLVA.

The protein belongs to the auxin efflux carrier (TC 2.A.69.2) family. In terms of tissue distribution, expressed in seedlings, rosette and cauline leaves, flowers and siliques.

Its subcellular location is the endoplasmic reticulum membrane. Functionally, involved in cellular auxin homeostasis by regulating auxin metabolism. Regulates intracellular auxin accumulation at the endoplasmic reticulum and thus auxin availability for nuclear auxin signaling. This chain is Protein PIN-LIKES 3 (PILS3), found in Arabidopsis thaliana (Mouse-ear cress).